A 179-amino-acid polypeptide reads, in one-letter code: Inner membrane-spanning protein YciB (179 aa).

5 consecutive transmembrane segments (helical) span residues 22–42 (IYAA…YSWV), 50–70 (MALI…FFHN), 76–96 (WKVT…QWVM), 121–141 (LAWA…AFWL), and 149–169 (FKVF…GIYI).

The protein belongs to the YciB family.

It localises to the cell inner membrane. In terms of biological role, plays a role in cell envelope biogenesis, maintenance of cell envelope integrity and membrane homeostasis. This chain is Inner membrane-spanning protein YciB, found in Klebsiella pneumoniae (strain 342).